The sequence spans 571 residues: Hemagglutinin-neuraminidase (571 aa).

The Intravirion portion of the chain corresponds to 1 to 26 (MDRAVNRVVLENEEREAKNTWRLVFR). A helical transmembrane segment spans residues 27-47 (IAVLLLMVMTLAISAAALVYS). The Virion surface portion of the chain corresponds to 48–571 (MGASTPRDLA…LVEILKDDRV (524 aa)). Asn119 is a glycosylation site (N-linked (GlcNAc...) asparagine; by host). Residues 124 to 152 (GEPVHDPDYIGGIGKELIVDDISDVTSFY) are important for interaction with fusion/F protein. Intrachain disulfides connect Cys172/Cys196, Cys186/Cys247, and Cys238/Cys251. Residues 234 to 239 (NRKSCS) are involved in neuraminidase activity. N-linked (GlcNAc...) asparagine; by host glycans are attached at residues Asn341 and Asn433. Intrachain disulfides connect Cys344–Cys461 and Cys455–Cys465. N-linked (GlcNAc...) asparagine; by host glycosylation is found at Asn481, Asn508, and Asn538. Cys531 and Cys542 form a disulfide bridge.

This sequence belongs to the paramyxoviruses hemagglutinin-neuraminidase family. Homotetramer; composed of disulfide-linked homodimers. Interacts with F protein trimer. Interacts with host CG-1B; this interaction inhibits viral adsorption and replication rather than internalization.

It is found in the virion membrane. Its subcellular location is the host cell membrane. The enzyme catalyses Hydrolysis of alpha-(2-&gt;3)-, alpha-(2-&gt;6)-, alpha-(2-&gt;8)- glycosidic linkages of terminal sialic acid residues in oligosaccharides, glycoproteins, glycolipids, colominic acid and synthetic substrates.. Mediates the viral entry into the host cell together with fusion/F protein. Attaches the virus to sialic acid-containing cell receptors and thereby initiates infection. Binding of HN protein to the receptor induces a conformational change that allows the F protein to trigger virion/cell membranes fusion. In terms of biological role, neuraminidase activity ensures the efficient spread of the virus by dissociating the mature virions from the neuraminic acid containing glycoproteins. The chain is Hemagglutinin-neuraminidase (HN) from Gallus gallus (Chicken).